The chain runs to 298 residues: Lipoyl synthase 1 (298 aa).

Residues cysteine 34, cysteine 39, cysteine 45, cysteine 60, cysteine 64, cysteine 67, and serine 274 each contribute to the [4Fe-4S] cluster site. The region spanning 46–263 is the Radical SAM core domain; it reads FYQGTATFLM…RRLGESMGFL (218 aa).

This sequence belongs to the radical SAM superfamily. Lipoyl synthase family. It depends on [4Fe-4S] cluster as a cofactor.

The protein localises to the cytoplasm. It carries out the reaction [[Fe-S] cluster scaffold protein carrying a second [4Fe-4S](2+) cluster] + N(6)-octanoyl-L-lysyl-[protein] + 2 oxidized [2Fe-2S]-[ferredoxin] + 2 S-adenosyl-L-methionine + 4 H(+) = [[Fe-S] cluster scaffold protein] + N(6)-[(R)-dihydrolipoyl]-L-lysyl-[protein] + 4 Fe(3+) + 2 hydrogen sulfide + 2 5'-deoxyadenosine + 2 L-methionine + 2 reduced [2Fe-2S]-[ferredoxin]. It participates in protein modification; protein lipoylation via endogenous pathway; protein N(6)-(lipoyl)lysine from octanoyl-[acyl-carrier-protein]: step 2/2. Functionally, catalyzes the radical-mediated insertion of two sulfur atoms into the C-6 and C-8 positions of the octanoyl moiety bound to the lipoyl domains of lipoate-dependent enzymes, thereby converting the octanoylated domains into lipoylated derivatives. This Thermosynechococcus vestitus (strain NIES-2133 / IAM M-273 / BP-1) protein is Lipoyl synthase 1.